Reading from the N-terminus, the 289-residue chain is Diaminopimelate epimerase (289 aa).

Substrate contacts are provided by Asn-13, Gln-47, and Asn-67. Cys-76 functions as the Proton donor in the catalytic mechanism. Substrate is bound by residues 77-78 (GN), Asn-167, Asn-200, and 218-219 (ER). The Proton acceptor role is filled by Cys-227. 228–229 (GT) is a binding site for substrate.

It belongs to the diaminopimelate epimerase family. Homodimer.

The protein resides in the cytoplasm. The catalysed reaction is (2S,6S)-2,6-diaminopimelate = meso-2,6-diaminopimelate. It participates in amino-acid biosynthesis; L-lysine biosynthesis via DAP pathway; DL-2,6-diaminopimelate from LL-2,6-diaminopimelate: step 1/1. In terms of biological role, catalyzes the stereoinversion of LL-2,6-diaminopimelate (L,L-DAP) to meso-diaminopimelate (meso-DAP), a precursor of L-lysine and an essential component of the bacterial peptidoglycan. The polypeptide is Diaminopimelate epimerase (Burkholderia pseudomallei (strain K96243)).